The following is a 239-amino-acid chain: Large ribosomal subunit protein uL1 (239 aa).

The protein belongs to the universal ribosomal protein uL1 family. Part of the 50S ribosomal subunit.

Functionally, binds directly to 23S rRNA. The L1 stalk is quite mobile in the ribosome, and is involved in E site tRNA release. In terms of biological role, protein L1 is also a translational repressor protein, it controls the translation of the L11 operon by binding to its mRNA. This chain is Large ribosomal subunit protein uL1, found in Mycolicibacterium gilvum (strain PYR-GCK) (Mycobacterium gilvum (strain PYR-GCK)).